The following is a 394-amino-acid chain: Protein TsgA homolog (394 aa).

The next 12 membrane-spanning stretches (helical) occupy residues 11–31 (WISFFSYALTGALVIVTGMVM), 51–71 (FLNAGILISIFLNAWLMEIVP), 78–98 (FGFVLMVAAVAGLMVSHSIAL), 101–121 (VSMFVLGLVSGITMSIGTFLI), 134–154 (LLFTDSFFSMAGMIFPMVAAV), 162–182 (WYWVYACIGLVYVAIFVLTFG), 206–226 (IGVLFLSVAALCYILGQLGFI), 250–270 (FWMSYMFGMWAFSFILRFFDL), 273–293 (ILTVLAGLATVLMYLFINGAP), 297–317 (AWFILTLGFFSSAIYTSIITL), 332–352 (FVLTCGTIGTMLTFVVTGPIV), and 361–381 (LQTANGLYAVVFVMCLILGFV).

It belongs to the major facilitator superfamily. TsgA family.

It localises to the cell inner membrane. The polypeptide is Protein TsgA homolog (Enterobacter sp. (strain 638)).